The following is a 1566-amino-acid chain: Arginine-glutamic acid dipeptide repeats protein (1566 aa).

Residues methionine 1–arginine 36 show a composition bias toward basic and acidic residues. Residues methionine 1 to aspartate 90 form a disordered region. Phosphoserine occurs at positions 53 and 56. The segment covering lysine 74–arginine 85 has biased composition (basic residues). Residues valine 103–glutamine 283 enclose the BAH domain. Threonine 120 is modified (phosphothreonine). Phosphoserine occurs at positions 142 and 304. Residues glycine 284–proline 387 form the ELM2 domain. One can recognise an SANT domain in the interval leucine 391–glutamate 443. The interval threonine 464–serine 495 is disordered. Positions arginine 465 to proline 474 are enriched in polar residues. Residues serine 479–alanine 488 are compositionally biased toward low complexity. The GATA-type zinc-finger motif lies at cysteine 507 to cysteine 532. The tract at residues leucine 542 to phenylalanine 1133 is disordered. Lysine 560 is covalently cross-linked (Glycyl lysine isopeptide (Lys-Gly) (interchain with G-Cter in SUMO2)). A phosphoserine mark is found at serine 594, serine 600, and serine 613. The segment covering serine 609–aspartate 623 has biased composition (low complexity). The span at serine 624–alanine 640 shows a compositional bias: basic and acidic residues. Lysine 637 is covalently cross-linked (Glycyl lysine isopeptide (Lys-Gly) (interchain with G-Cter in SUMO2)). Phosphoserine is present on residues serine 642, serine 656, serine 675, and serine 679. Over residues glutamate 652–glutamate 673 the composition is skewed to basic and acidic residues. Positions serine 688–asparagine 708 are enriched in basic and acidic residues. Polar residues predominate over residues arginine 709–aspartate 720. A compositionally biased stretch (low complexity) spans aspartate 726–proline 751. Pro residues predominate over residues serine 752–threonine 767. Residues serine 778–proline 796 show a composition bias toward low complexity. A compositionally biased stretch (pro residues) spans glutamine 809–glutamine 827. Polar residues predominate over residues leucine 829–serine 840. Low complexity-rich tracts occupy residues glutamine 843–histidine 865 and serine 897–proline 913. Pro residues predominate over residues arginine 914–proline 940. Positions lysine 970 to proline 980 are enriched in low complexity. Residues proline 1030–cysteine 1052 show a composition bias toward pro residues. Positions proline 1053–serine 1085 are enriched in low complexity. Residues serine 1106, serine 1113, and serine 1115 each carry the phosphoserine modification. Over residues serine 1106–glutamate 1117 the composition is skewed to pro residues. Threonine 1119 carries the post-translational modification Phosphothreonine. Residues glycine 1156–serine 1211 adopt a coiled-coil conformation. The residue at position 1158 (lysine 1158) is an N6-acetyllysine. The segment covering lysine 1162–alanine 1206 has biased composition (basic and acidic residues). The disordered stretch occupies residues lysine 1162 to isoleucine 1246. Tyrosine 1259 is modified (phosphotyrosine). At serine 1266 the chain carries Phosphoserine.

In terms of assembly, interacts with HDAC1. Interacts with ATN1. Interaction with ATN1 is improved when the poly-Gln region of ATN1 is extended. Interacts with FAT1. As to expression, widely expressed. Expressed in tumor cell lines.

The protein localises to the nucleus. In terms of biological role, plays a role as a transcriptional repressor during development. May play a role in the control of cell survival. Overexpression of RERE recruits BAX to the nucleus particularly to POD and triggers caspase-3 activation, leading to cell death. The chain is Arginine-glutamic acid dipeptide repeats protein (RERE) from Homo sapiens (Human).